The chain runs to 235 residues: MSDVLPAFWAVIPAAGVGARMAADRPKQYLQLGGRTILEHSLGCFLDHPGLKGLVVSLAVDDPYWPALACAHDSRIQRVEGGAERSGSVLNALLHLHAQGAADDDWVLVHDAARPNLSRDDLDKLLGELMDDPVGGLLAVPARDTLKRVDKHGRVLETVDRSLIWQAYTPQMFRLGALHRALADSLVADVAITDEASAMEWAGQAPRLIEGRSDNLKVTRPEDLEWLRQRWSNRR.

The protein belongs to the IspD/TarI cytidylyltransferase family. IspD subfamily.

It catalyses the reaction 2-C-methyl-D-erythritol 4-phosphate + CTP + H(+) = 4-CDP-2-C-methyl-D-erythritol + diphosphate. Its pathway is isoprenoid biosynthesis; isopentenyl diphosphate biosynthesis via DXP pathway; isopentenyl diphosphate from 1-deoxy-D-xylulose 5-phosphate: step 2/6. Functionally, catalyzes the formation of 4-diphosphocytidyl-2-C-methyl-D-erythritol from CTP and 2-C-methyl-D-erythritol 4-phosphate (MEP). This Pseudomonas fluorescens (strain ATCC BAA-477 / NRRL B-23932 / Pf-5) protein is 2-C-methyl-D-erythritol 4-phosphate cytidylyltransferase.